The following is a 194-amino-acid chain: Ras-like protein rasS (194 aa).

10-17 (GPGGVGKS) is a GTP binding site. The Effector region motif lies at 32-40 (YDPTLEDSY). Residues 57–61 (DTAGQ) and 116–119 (NKCD) each bind GTP. Residues 168–194 (RQSNQHSNSQEQNTDQPIKKKKSCNLL) form a disordered region. Low complexity predominate over residues 169-180 (QSNQHSNSQEQN). The residue at position 191 (cysteine 191) is a Cysteine methyl ester. Cysteine 191 carries S-geranylgeranyl cysteine lipidation. A propeptide spans 192-194 (NLL) (removed in mature form).

It belongs to the small GTPase superfamily. Ras family.

It localises to the cell membrane. The enzyme catalyses GTP + H2O = GDP + phosphate + H(+). Its function is as follows. Ras proteins bind GDP/GTP and possess intrinsic GTPase activity. The chain is Ras-like protein rasS (rasS) from Dictyostelium discoideum (Social amoeba).